A 300-amino-acid chain; its full sequence is Urease accessory protein UreD (300 aa).

Belongs to the UreD family. In terms of assembly, ureD, UreF and UreG form a complex that acts as a GTP-hydrolysis-dependent molecular chaperone, activating the urease apoprotein by helping to assemble the nickel containing metallocenter of UreC. The UreE protein probably delivers the nickel.

Its subcellular location is the cytoplasm. Required for maturation of urease via the functional incorporation of the urease nickel metallocenter. This is Urease accessory protein UreD from Prochlorococcus marinus (strain MIT 9215).